We begin with the raw amino-acid sequence, 1001 residues long: E3 ubiquitin-protein ligase BRE1B (1001 aa).

The disordered stretch occupies residues 1-40 (MSGLSNKRAAGDGGSGPPEKKMNREEKTTTTLIEPIRLGG). Over residues 18–28 (PEKKMNREEKT) the composition is skewed to basic and acidic residues. Lysine 20 carries the post-translational modification N6-acetyllysine. A Phosphoserine modification is found at serine 42. Positions 55–91 (KNKKLAERLEQRQACEDELRERIEKLEKRQATDDATL) form a coiled coil. The interval 122-142 (TEVPGCQEGLTRDVIPRPDPG) is disordered. Coiled-coil stretches lie at residues 189–377 (KAAV…LRSL) and 437–525 (LQKK…ASGS). N6-acetyllysine occurs at positions 355 and 517. The disordered stretch occupies residues 519–647 (RAQASGSSHC…KAKVEEAKRK (129 aa)). A compositionally biased stretch (low complexity) spans 565–576 (ALLAGATSATSS). Glycyl lysine isopeptide (Lys-Gly) (interchain with G-Cter in SUMO2) cross-links involve residues lysine 578 and lysine 579. Phosphoserine occurs at positions 584 and 585. Basic and acidic residues-rich tracts occupy residues 602–619 (RGRE…EREG) and 633–647 (RADR…AKRK). The stretch at 627-946 (AASTLSRADR…EEIKEYKARL (320 aa)) forms a coiled coil. An RING-type zinc finger spans residues 948 to 987 (CPCCNTRKKDAVLTKCFHVFCFECVRGRYEARQRKCPKCN).

Belongs to the BRE1 family. Component of the RNF20/40 complex (also known as BRE1 complex) probably composed of 2 copies of RNF20/BRE1A and 2 copies of RNF40/BRE1B. Interacts with UBE2E1/UBCH6. Interacts with RB1 and WAC.

The protein resides in the nucleus. The catalysed reaction is S-ubiquitinyl-[E2 ubiquitin-conjugating enzyme]-L-cysteine + [acceptor protein]-L-lysine = [E2 ubiquitin-conjugating enzyme]-L-cysteine + N(6)-ubiquitinyl-[acceptor protein]-L-lysine.. It participates in protein modification; protein ubiquitination. Component of the RNF20/40 E3 ubiquitin-protein ligase complex that mediates monoubiquitination of 'Lys-120' of histone H2B (H2BK120ub1). H2BK120ub1 gives a specific tag for epigenetic transcriptional activation and is also prerequisite for histone H3 'Lys-4' and 'Lys-79' methylation (H3K4me and H3K79me, respectively). It thereby plays a central role in histone code and gene regulation. The RNF20/40 complex forms a H2B ubiquitin ligase complex in cooperation with the E2 enzyme UBE2A or UBE2B; reports about the cooperation with UBE2E1/UBCH are contradictory. Required for transcriptional activation of Hox genes. In Mus musculus (Mouse), this protein is E3 ubiquitin-protein ligase BRE1B (Rnf40).